An 85-amino-acid chain; its full sequence is Putative membrane protein insertion efficiency factor (85 aa).

Belongs to the UPF0161 family.

Its subcellular location is the cell membrane. Could be involved in insertion of integral membrane proteins into the membrane. This Buchnera aphidicola subsp. Baizongia pistaciae (strain Bp) protein is Putative membrane protein insertion efficiency factor.